Consider the following 244-residue polypeptide: ATP synthase subunit b 2 (244 aa).

The helical transmembrane segment at T2–L22 threads the bilayer.

It belongs to the ATPase B chain family. In terms of assembly, F-type ATPases have 2 components, F(1) - the catalytic core - and F(0) - the membrane proton channel. F(1) has five subunits: alpha(3), beta(3), gamma(1), delta(1), epsilon(1). F(0) has three main subunits: a(1), b(2) and c(10-14). The alpha and beta chains form an alternating ring which encloses part of the gamma chain. F(1) is attached to F(0) by a central stalk formed by the gamma and epsilon chains, while a peripheral stalk is formed by the delta and b chains.

It localises to the cell inner membrane. In terms of biological role, f(1)F(0) ATP synthase produces ATP from ADP in the presence of a proton or sodium gradient. F-type ATPases consist of two structural domains, F(1) containing the extramembraneous catalytic core and F(0) containing the membrane proton channel, linked together by a central stalk and a peripheral stalk. During catalysis, ATP synthesis in the catalytic domain of F(1) is coupled via a rotary mechanism of the central stalk subunits to proton translocation. Its function is as follows. Component of the F(0) channel, it forms part of the peripheral stalk, linking F(1) to F(0). This chain is ATP synthase subunit b 2, found in Gluconobacter oxydans (strain 621H) (Gluconobacter suboxydans).